The sequence spans 369 residues: Cytokine receptor common subunit gamma (369 aa).

Positions 1–22 are cleaved as a signal peptide; that stretch reads MLKPSLPFTSLLFLQLPLLGVG. The Extracellular segment spans residues 23-262; the sequence is LNTTILTPNG…ENPFLFALEA (240 aa). Asn-24, Asn-71, Asn-75, and Asn-84 each carry an N-linked (GlcNAc...) asparagine glycan. Cys-62 and Cys-72 form a disulfide bridge. Cys-102 and Cys-115 are joined by a disulfide. Residues 156–253 enclose the Fibronectin type-III domain; it reads APENLTLHKL…IHWGSNTSKE (98 aa). Asn-159 is a glycosylation site (N-linked (GlcNAc...) asparagine). Cys-182 and Cys-231 are disulfide-bonded. Positions 237-241 match the WSXWS motif motif; sequence WSEWS. An N-linked (GlcNAc...) asparagine glycan is attached at Asn-249. Residues 263–283 traverse the membrane as a helical segment; the sequence is VVISVGSMGLIISLLCVYFWL. Residues 284 to 369 are Cytoplasmic-facing; sequence ERTMPRIPTL…PPCYTLKPET (86 aa). The short motif at 286–294 is the Box 1 motif element; the sequence is TMPRIPTLK. Thr-292 carries the post-translational modification Phosphothreonine.

This sequence belongs to the type I cytokine receptor family. Type 5 subfamily. In terms of assembly, the gamma subunit is common to the IL2, IL4, IL7, IL15, IL21 and probably also the IL13 receptors. Interacts with SHB upon interleukin stimulation. Interacts with IL9. As to quaternary structure, (Microbial infection) Interacts with HTLV-1 accessory protein p12I.

It is found in the cell membrane. The protein resides in the cell surface. Common subunit for the receptors for a variety of interleukins. Probably in association with IL15RA, involved in the stimulation of neutrophil phagocytosis by IL15. This Homo sapiens (Human) protein is Cytokine receptor common subunit gamma (IL2RG).